The primary structure comprises 450 residues: MGKYFGTDGVRGVANSELTPELAFRLGRMGGYVLTRHVGEHPRVLVARDTRISGEMLESALIAGLVSVGIEVMRLGVISTPGVAYLTKAQGASASVMISASHNPVDDNGIKFFGSDGFKLSDDQEEEIEQLLDTAEDTLPRPSGEGLGTVSDYFEGKQKYIQYLKQTIENDFNGYHIALDCANGATSGLATHLFADLDADISSMGASPNGLNINDGVGSTHPEALAAFVLDKKADVGLAFDGDGDRVIAIDEIGQIVDGDKIMFICAKYLREQGLLNSNTIVSTVMSNLGFYKGLRELEIEDVQTAVGDRYVVEAMREGNYNLGGEQSGHIIFLDHNTTGDGLLSGIQLINVMKATGKKLSELASEMKTFPQKLENIRVSDKNHVTDNPKVSKVISEVEAEMAGNGRVLVRPSGTEPLVRVMVEAATKEATDEYCERISAVVRSEMALND.

Ser-101 acts as the Phosphoserine intermediate in catalysis. Mg(2+) contacts are provided by Ser-101, Asp-241, Asp-243, and Asp-245. Ser-101 is subject to Phosphoserine.

The protein belongs to the phosphohexose mutase family. The cofactor is Mg(2+). Activated by phosphorylation.

The enzyme catalyses alpha-D-glucosamine 1-phosphate = D-glucosamine 6-phosphate. Functionally, catalyzes the conversion of glucosamine-6-phosphate to glucosamine-1-phosphate. This is Phosphoglucosamine mutase from Listeria innocua serovar 6a (strain ATCC BAA-680 / CLIP 11262).